A 626-amino-acid polypeptide reads, in one-letter code: MIQLNNGIRIFVNHSMKKDIYIGISDFGFEKDINDGILGIAHLLEHILISFDNKYFNANASTSRTYMSFWCVALQKRHYEDAIRTAISWFFDKKYILKTDFSRIVLENYITELENEYYYRTEMYHCMDVLAYLYGGDLYNGGRITMLERLPEIRNMLSNRMKFLSGKNIVIFVKRLTNNILTLLTNTFGSIPKYPIIIPLDPQIQDARRKIIMMPCPFYTLLIQVDNTMNNLLAIICLVENYNLIDYETISDKLYVCISFANEDQYEYLLYNIKDMDFNINRIELDLGEDYIMNLYINFPWLKNDIFEYIHTMNTKSAMLLADLKKNMHNSILEHKFMIIYPSFTKLLYNITDKQNHGILVVGDVSFTPEKDPSMHHSNKENNNNYSKTVTKRKSKYVMYRKTPTTNNIVIDYTDSSFFDYATFYHVMKSKYEKTNLFSRLKTSTGMCYKHCFDNDDLNELINSDTFIRYNSSKPAVLYQYILLAYFVTERDIKELVDYKDAIELDMKYYSKNKILFGKNTRYDIRTKSMFVCGLIKGRKLSEKVITDYMWKLKSLGLIYYLTSIKLGISNTFYIFAFTIFPEKVYNFFVGLKEITNRCLIVSNKNTKIEEDDYSSLNKQIVIGIK.

Residue histidine 42 participates in Zn(2+) binding. Glutamate 45 is an active-site residue. Residue histidine 46 coordinates Zn(2+).

Belongs to the peptidase M44 family. Zn(2+) serves as cofactor.

Functionally, seems to be involved in viral proteins maturation by cleavage at Ala-Gly-|-Xaa motifs. The chain is Probable metalloendopeptidase G1-type from Fowlpox virus (strain NVSL) (FPV).